The sequence spans 663 residues: MKKYDLSTNEISDNLRYLELLSKQYPTINEASTEIINLQAILNLPKGTEHFLTDIHGEYEPFIHVLKNASGVIKRKIEDLFGNSLMQSEKKSLATLIYYPEQKLEIVLKQEENIDDWYKINLYRLIEICRYVSSKYTRSKVRKALPKDFTYIIEELLHEQPKGIDKYEYYEQIIRTIIDTDRSKEFIVALSKLIQRLVIDRLHILGDIFDRGPGADIIMDTLVEYHSVDIQWGNHDILWMGAACGSDVCIANVIKNSLKYANLDTLENGYGINLLPLATFSMDFYKDHPCNIFLPKMDCDKKYSINEINLIAQMHKAIAIILFKLEGQVILRHPEFNMNHRLLLNKINYAEGTINLNGKTHKLKDSFFPTIDPKNPYELTYDEKELIDKLKTSFINSDKYNKHVRFLYSNGSLYLKFNSNLLYHGFIPLNEDGSFKKVKIADKEYKGKELLDKLDMLAREAYFSKDKDDSDNKKDIMWYLWCGASSPLFGKDRMTIFEQYFIEEKETHYEKKDPYFSLRDNEDICKKILKEFGLSSPESHIINGHMPVEEKNGESPIKANGTLLVIDGGFSKAYQPKTGLAGYTLIYNSFGLQLVSHQPFESTEAAIKEETDILSTTLLLEQVVNRKRVEDTDVGVTLKQQIDDLKMLLNAYRKGLIKQQNKI.

It belongs to the FBPase class 3 family. Requires Mn(2+) as cofactor.

The enzyme catalyses beta-D-fructose 1,6-bisphosphate + H2O = beta-D-fructose 6-phosphate + phosphate. It functions in the pathway carbohydrate biosynthesis; gluconeogenesis. The sequence is that of Fructose-1,6-bisphosphatase class 3 1 from Clostridium beijerinckii (strain ATCC 51743 / NCIMB 8052) (Clostridium acetobutylicum).